The following is a 407-amino-acid chain: Putative glycosyltransferase YtcC (407 aa).

This sequence belongs to the glycosyltransferase group 1 family. Glycosyltransferase 4 subfamily.

The chain is Putative glycosyltransferase YtcC (ytcC) from Bacillus subtilis (strain 168).